The primary structure comprises 155 residues: MFDILVYLFESYIHANACPASDQLARKLSAAGFEDEEINEALDWLAGLRRVAAETHPCVAPSRSAVRLYSDYECTRLSAACRGFLTFLEGAGVLDAVSRELIVERAVALSNFTITLGRLKVIVLMVLWQREQPVDTLIIDELLSSDDDEGAPLLH.

It belongs to the Smg family.

The protein is Protein Smg homolog of Azoarcus sp. (strain BH72).